The following is a 733-amino-acid chain: Protein OBERON 3 (733 aa).

The segment covering 1 to 15 has biased composition (basic and acidic residues); the sequence is MIGEKDLAGDGECSR. 2 disordered regions span residues 1 to 42 and 118 to 142; these read MIGE…YHQK and NPNS…KKSN. Residues 21–30 are compositionally biased toward polar residues; sequence PRFSNLNNQT. Residues 120–153 are a coiled coil; the sequence is NSSKRKAHEEEEEAEEEEDKKSNKIETLNLSLAL. A PHD-type zinc finger spans residues 436-500; sequence SCMCPVCLRF…MFHCIGCAHK (65 aa). A disordered region spans residues 592 to 614; it reads VAAETSYRKDEASVTPSTSKDQK. Positions 644 to 733 form a coiled coil; it reads MFQKKADEAR…RMEVTRQQLV (90 aa).

Self-interacts. Interacts with OBE1 and OBE2. Interacts with OBE4.

It localises to the nucleus. Its function is as follows. Probable transcription factor that functions redundantly with OBE4 in specification of the hypophysis and establishment of the embryonic root. Involved in the activation of ARF5/MP-dependent gene expression during embryonic root meristem initiation. Involved in shoot meristem homeostasis. The sequence is that of Protein OBERON 3 from Arabidopsis thaliana (Mouse-ear cress).